The following is a 623-amino-acid chain: Leucine-rich repeat, immunoglobulin-like domain and transmembrane domain-containing protein 1 (623 aa).

The first 21 residues, 1–21 (MWVALGMLWLLALGGPHQAWS), serve as a signal peptide directing secretion. The LRRNT domain occupies 22–59 (FCPSQCSCSLHILSDGSKARTVVCSDPDLTLPPASIPP). Over 22–526 (FCPSQCSCSL…EVVDAEGTQR (505 aa)) the chain is Lumenal. LRR repeat units lie at residues 60–81 (DTCKLRLERTAIRRVPGETFRP), 84–105 (RLEQLWLPYNALSELSTLMLRG), 108–128 (RLRELRLPGNHLVTFPWAALK), 132–153 (QLQLLDLQANRLSTLPPEAVHF), and 156–177 (NLTFLDLSNNQLMRLPEELLDT). Asn156 carries N-linked (GlcNAc...) asparagine glycosylation. Residues 201–253 (NPWVCDCRLYDLVHLLDGWASNLIFIEARLRCGSPRSLAGVAFSQLELRKCQS) enclose the LRRCT domain. An Ig-like C2-type domain is found at 266 to 332 (PLGSTVLLRC…SGDYICQAKN (67 aa)). A disulfide bond links Cys275 and Cys328. Residues Asn296 and Asn455 are each glycosylated (N-linked (GlcNAc...) asparagine). One can recognise a Fibronectin type-III domain in the interval 430–518 (MVRSLKVVGD…QCVIFSTDEV (89 aa)). An LRR 6 repeat occupies 525–548 (QRLINMVVISVAAIIALPPTLLVC). The chain crosses the membrane as a helical span at residues 527–547 (LINMVVISVAAIIALPPTLLV). Over 548 to 623 (CCGALRRRCH…GGRRINEYFC (76 aa)) the chain is Cytoplasmic.

In terms of assembly, homodimer. Interacts with LRIT2; may form a heterodimer with LRIT2. Interacts (via its N-terminal extracellular domain) with metabotropic glutamate receptor GRM6. Interacts (via its extreme C-terminus) with the scaffold protein FRMPD2 (via the third PDZ domain); the interaction leads to their colocalization in photoreceptor synapses. As to expression, retina, outer segments of photoreceptor cells.

The protein resides in the endoplasmic reticulum membrane. The protein localises to the cell projection. It is found in the dendrite. Photoreceptor synaptic protein essential for normal vision. Involved in synapse formation in cone photoreceptor cells. The protein is Leucine-rich repeat, immunoglobulin-like domain and transmembrane domain-containing protein 1 (Lrit1) of Rattus norvegicus (Rat).